Here is a 399-residue protein sequence, read N- to C-terminus: Tryptophan synthase beta chain (399 aa).

Lys-92 is subject to N6-(pyridoxal phosphate)lysine.

Belongs to the TrpB family. In terms of assembly, tetramer of two alpha and two beta chains. The cofactor is pyridoxal 5'-phosphate.

The catalysed reaction is (1S,2R)-1-C-(indol-3-yl)glycerol 3-phosphate + L-serine = D-glyceraldehyde 3-phosphate + L-tryptophan + H2O. It functions in the pathway amino-acid biosynthesis; L-tryptophan biosynthesis; L-tryptophan from chorismate: step 5/5. The beta subunit is responsible for the synthesis of L-tryptophan from indole and L-serine. The protein is Tryptophan synthase beta chain of Legionella pneumophila (strain Paris).